The following is a 233-amino-acid chain: Orotidine 5'-phosphate decarboxylase (233 aa).

Residues aspartate 11, lysine 34, 61–70 (DLKLHDIPNT), threonine 117, arginine 179, glutamine 188, glycine 208, and arginine 209 each bind substrate. The Proton donor role is filled by lysine 63.

Belongs to the OMP decarboxylase family. Type 1 subfamily. In terms of assembly, homodimer.

The enzyme catalyses orotidine 5'-phosphate + H(+) = UMP + CO2. It functions in the pathway pyrimidine metabolism; UMP biosynthesis via de novo pathway; UMP from orotate: step 2/2. Functionally, catalyzes the decarboxylation of orotidine 5'-monophosphate (OMP) to uridine 5'-monophosphate (UMP). The sequence is that of Orotidine 5'-phosphate decarboxylase from Streptococcus pneumoniae (strain JJA).